The following is a 501-amino-acid chain: Cryptochrome-1 (501 aa).

The Photolyase/cryptochrome alpha/beta domain occupies 5 to 134 (KKTIVWFRRD…SVQSYNGDLC (130 aa)). Residues Y231 and 243-247 (TSLLS) each bind FAD. Residue R356 participates in ATP binding. 2 residues coordinate FAD: D386 and D388. Residue D405 coordinates ATP.

The protein belongs to the DNA photolyase class-1 family. As to quaternary structure, homodimer. FAD serves as cofactor. (6R)-5,10-methylene-5,6,7,8-tetrahydrofolate is required as a cofactor.

Mediates blue light-induced gene expression in addition to its role in blue light-dependent inhibition of stem growth. The polypeptide is Cryptochrome-1 (PHR1) (Sinapis alba (White mustard)).